Here is a 194-residue protein sequence, read N- to C-terminus: Cysteine and glycine-rich protein 2 (194 aa).

An LIM zinc-binding 1 domain is found at C10–C61. Positions K64 to K69 match the Nuclear localization signal motif. An LIM zinc-binding 2 domain is found at C120–C171.

It is found in the nucleus. Totally down-regulated in transformed cells. May therefore take part in the control of cell growth and differentiation. In Gallus gallus (Chicken), this protein is Cysteine and glycine-rich protein 2 (CSRP2).